A 210-amino-acid polypeptide reads, in one-letter code: Fibrillarin-like rRNA/tRNA 2'-O-methyltransferase (210 aa).

Residues 70–71 (TT), 88–89 (EY), 113–114 (DA), and 133–136 (DIAQ) contribute to the S-adenosyl-L-methionine site.

It belongs to the methyltransferase superfamily. Fibrillarin family. Interacts with nop5. Component of box C/D small ribonucleoprotein (sRNP) particles that contain rpl7ae, FlpA and nop5, plus a guide RNA.

In terms of biological role, involved in pre-rRNA and tRNA processing. Utilizes the methyl donor S-adenosyl-L-methionine to catalyze the site-specific 2'-hydroxyl methylation of ribose moieties in rRNA and tRNA. Site specificity is provided by a guide RNA that base pairs with the substrate. Methylation occurs at a characteristic distance from the sequence involved in base pairing with the guide RNA. In Archaeoglobus fulgidus (strain ATCC 49558 / DSM 4304 / JCM 9628 / NBRC 100126 / VC-16), this protein is Fibrillarin-like rRNA/tRNA 2'-O-methyltransferase.